A 442-amino-acid polypeptide reads, in one-letter code: tRNA-2-methylthio-N(6)-dimethylallyladenosine synthase (442 aa).

One can recognise an MTTase N-terminal domain in the interval 5–122 (KRIFIKTFGC…LPDMIESKRR (118 aa)). Cysteine 14, cysteine 51, cysteine 85, cysteine 159, cysteine 163, and cysteine 166 together coordinate [4Fe-4S] cluster. Residues 145-377 (RVEGAAAFLS…QALNEAQGKA (233 aa)) form the Radical SAM core domain. In terms of domain architecture, TRAM spans 380–442 (ASMVGSIQRV…LSHTLRGELV (63 aa)).

This sequence belongs to the methylthiotransferase family. MiaB subfamily. As to quaternary structure, monomer. [4Fe-4S] cluster serves as cofactor.

Its subcellular location is the cytoplasm. It catalyses the reaction N(6)-dimethylallyladenosine(37) in tRNA + (sulfur carrier)-SH + AH2 + 2 S-adenosyl-L-methionine = 2-methylsulfanyl-N(6)-dimethylallyladenosine(37) in tRNA + (sulfur carrier)-H + 5'-deoxyadenosine + L-methionine + A + S-adenosyl-L-homocysteine + 2 H(+). Catalyzes the methylthiolation of N6-(dimethylallyl)adenosine (i(6)A), leading to the formation of 2-methylthio-N6-(dimethylallyl)adenosine (ms(2)i(6)A) at position 37 in tRNAs that read codons beginning with uridine. This Methylobacillus flagellatus (strain ATCC 51484 / DSM 6875 / VKM B-1610 / KT) protein is tRNA-2-methylthio-N(6)-dimethylallyladenosine synthase.